A 495-amino-acid polypeptide reads, in one-letter code: Heat stress transcription factor A-1a (495 aa).

A DNA-binding region spans residues 50–144 (PPPFLSKTYD…LLKKISRRKS (95 aa)). A disordered region spans residues 140–164 (SRRKSVQGHGSSSSNPQSQQLSQGQ). Residues 146-164 (QGHGSSSSNPQSQQLSQGQ) are compositionally biased toward low complexity. The hydrophobic repeat HR-A/B stretch occupies residues 172-238 (SCVEVGKFGL…QIMSFLAKAV (67 aa)). Residues 255 to 288 (NMHVTEANKKRRLREDSTAATESNSHSHSLEASD) are disordered. The Nuclear localization signal signature appears at 262 to 268 (NKKRRLR). Residues 272 to 281 (TAATESNSHS) are compositionally biased toward polar residues. The short motif at 433–442 (FEFLEEYMPE) is the AHA element. The tract at residues 445 to 477 (VFGDATTLENNNNNNNNNNNNNNNNNNNNTNGR) is disordered. Positions 454–473 (NNNNNNNNNNNNNNNNNNNN) are enriched in low complexity. The short motif at 482 to 489 (LIEELGLL) is the Nuclear export signal element.

It belongs to the HSF family. Class A subfamily. As to quaternary structure, homotrimer. Interacts with HSP70-1 and HSP70-4. Binds to CRK1. Binds to HSBP. In terms of processing, exhibits temperature-dependent phosphorylation. Phosphorylated by CRK1. In terms of tissue distribution, constitutively expressed.

Its subcellular location is the cytoplasm. It localises to the nucleus. Its function is as follows. Transcriptional activator that specifically binds DNA sequence 5'-AGAAnnTTCT-3' known as heat shock promoter elements (HSE). This chain is Heat stress transcription factor A-1a (HSFA1A), found in Arabidopsis thaliana (Mouse-ear cress).